A 343-amino-acid polypeptide reads, in one-letter code: MADPSSQNPNLATPPPPSSPSPTHQIQSGTSELSPPSRPPCSTLSFLKTANRPKLRVTSEFDSDSLLFLNKVSCKLFDNLAKLKLSFQNNSQREISQPQVSFTSKHVSVLYDVEEKNTFIKSTLDVHPRLQLRALHNVKAQQGEVAMEANLTEPGYSLELSSPVPIGYPRATLKFPLGEISLQEKDEEEEEKQKRTLSVNGILKRQVMNGVCTALYTDEELRLRYAYKDDALSFIPSISLPSNAASFAFKRRFSPSDKLSYWYNFDSNMWSAVYKRTYGKDYKLKAGYDSDVRLGWASLWVGDEAGKVKTTPMKMKVQFMLQVPQDDIKSSVLMFRVKKRWDI.

Polar residues-rich tracts occupy residues 1 to 11 (MADPSSQNPNL) and 23 to 43 (THQI…PCST). Positions 1 to 43 (MADPSSQNPNLATPPPPSSPSPTHQIQSGTSELSPPSRPPCST) are disordered. A chloroplast-targeting transit peptide spans 1–73 (MADPSSQNPN…DSLLFLNKVS (73 aa)). The Cytoplasmic portion of the chain corresponds to 74–76 (CKL). Residues 77-86 (FDNLAKLKLS) traverse the membrane as a beta stranded segment. Residues 87–103 (FQNNSQREISQPQVSFT) are Chloroplast intermembrane-facing. The chain crosses the membrane as a beta stranded span at residues 104–113 (SKHVSVLYDV). Over 114–129 (EEKNTFIKSTLDVHPR) the chain is Cytoplasmic. Residues 130-137 (LQLRALHN) form a beta stranded membrane-spanning segment. Topologically, residues 138–154 (VKAQQGEVAMEANLTEP) are chloroplast intermembrane. A beta stranded transmembrane segment spans residues 155–164 (GYSLELSSPV). Topologically, residues 165–169 (PIGYP) are cytoplasmic. Residues 170 to 178 (RATLKFPLG) form a beta stranded membrane-spanning segment. Topologically, residues 179 to 219 (EISLQEKDEEEEEKQKRTLSVNGILKRQVMNGVCTALYTDE) are chloroplast intermembrane. A beta stranded transmembrane segment spans residues 220 to 228 (ELRLRYAYK). Over 229–230 (DD) the chain is Cytoplasmic. A beta stranded transmembrane segment spans residues 231 to 240 (ALSFIPSISL). Position 241 (proline 241) is a topological domain, chloroplast intermembrane. The beta stranded transmembrane segment at 242–250 (SNAASFAFK) threads the bilayer. The Cytoplasmic portion of the chain corresponds to 251 to 257 (RRFSPSD). Residues 258-267 (KLSYWYNFDS) traverse the membrane as a beta stranded segment. The Chloroplast intermembrane segment spans residues 268–269 (NM). The chain crosses the membrane as a beta stranded span at residues 270–279 (WSAVYKRTYG). The Cytoplasmic segment spans residues 280 to 286 (KDYKLKA). Residues 287–296 (GYDSDVRLGW) traverse the membrane as a beta stranded segment. Residues 297-316 (ASLWVGDEAGKVKTTPMKMK) are Chloroplast intermembrane-facing. The beta stranded transmembrane segment at 317–326 (VQFMLQVPQD) threads the bilayer. At 327-343 (DIKSSVLMFRVKKRWDI) the chain is on the cytoplasmic side.

This sequence belongs to the plastid outer envelope porin OEP37 (TC 1.B.47) family. In terms of assembly, forms an hourglass-shaped multimeric complex. As to expression, ubiquitously expressed at low levels. Mostly present in cotyledons, and accumulates in seedlings and embryos.

The protein localises to the plastid. The protein resides in the chloroplast outer membrane. Functionally, voltage-dependent peptide-sensitive high conductance rectifying cation channel with a strong affinity for TIC32 that is imported into the chloroplast. Conductance is pH-dependent decreasing with decreasing pH values. The chain is Outer envelope pore protein 37, chloroplastic (OEP37) from Arabidopsis thaliana (Mouse-ear cress).